We begin with the raw amino-acid sequence, 211 residues long: uncharacterized protein (211 aa).

The signal sequence occupies residues 1–20 (MSRVQISTVLAIDTATPAVT).

The protein to M.leprae ML0378.

This is an uncharacterized protein from Mycobacterium tuberculosis (strain CDC 1551 / Oshkosh).